Reading from the N-terminus, the 127-residue chain is Small ribosomal subunit protein uS13 (127 aa).

Residues 97–127 (PVRGQRTRTNARTRRGGRKTVAGKKKAAAKK) form a disordered region. The span at 101–127 (QRTRTNARTRRGGRKTVAGKKKAAAKK) shows a compositional bias: basic residues.

The protein belongs to the universal ribosomal protein uS13 family. As to quaternary structure, part of the 30S ribosomal subunit. Forms a loose heterodimer with protein S19. Forms two bridges to the 50S subunit in the 70S ribosome.

In terms of biological role, located at the top of the head of the 30S subunit, it contacts several helices of the 16S rRNA. In the 70S ribosome it contacts the 23S rRNA (bridge B1a) and protein L5 of the 50S subunit (bridge B1b), connecting the 2 subunits; these bridges are implicated in subunit movement. Contacts the tRNAs in the A and P-sites. The sequence is that of Small ribosomal subunit protein uS13 from Gloeobacter violaceus (strain ATCC 29082 / PCC 7421).